An 83-amino-acid polypeptide reads, in one-letter code: Cytochrome b559 subunit alpha (83 aa).

Residues 21-35 form a helical membrane-spanning segment; that stretch reads VIHSITVPSLFIAGW. His23 contacts heme.

Belongs to the PsbE/PsbF family. Heterodimer of an alpha subunit and a beta subunit. PSII is composed of 1 copy each of membrane proteins PsbA, PsbB, PsbC, PsbD, PsbE, PsbF, PsbH, PsbI, PsbJ, PsbK, PsbL, PsbM, PsbT, PsbX, PsbY, PsbZ, Psb30/Ycf12, at least 3 peripheral proteins of the oxygen-evolving complex and a large number of cofactors. It forms dimeric complexes. Heme b is required as a cofactor.

It localises to the plastid. The protein resides in the chloroplast thylakoid membrane. Its function is as follows. This b-type cytochrome is tightly associated with the reaction center of photosystem II (PSII). PSII is a light-driven water:plastoquinone oxidoreductase that uses light energy to abstract electrons from H(2)O, generating O(2) and a proton gradient subsequently used for ATP formation. It consists of a core antenna complex that captures photons, and an electron transfer chain that converts photonic excitation into a charge separation. The sequence is that of Cytochrome b559 subunit alpha from Oltmannsiellopsis viridis (Marine flagellate).